Here is a 90-residue protein sequence, read N- to C-terminus: Small ribosomal subunit protein uS15c (90 aa).

The protein belongs to the universal ribosomal protein uS15 family. As to quaternary structure, part of the 30S ribosomal subunit.

It is found in the plastid. Its subcellular location is the chloroplast. This chain is Small ribosomal subunit protein uS15c (rps15), found in Citrus sinensis (Sweet orange).